A 348-amino-acid chain; its full sequence is 4-hydroxy-2-oxovalerate aldolase 2 (348 aa).

In terms of domain architecture, Pyruvate carboxyltransferase spans 5-256 (LQICDSTLRD…EARIKLFDAL (252 aa)). 13–14 (RD) provides a ligand contact to substrate. Aspartate 14 serves as a coordination point for Mn(2+). Histidine 17 serves as the catalytic Proton acceptor. Substrate-binding residues include serine 168 and histidine 195. The Mn(2+) site is built by histidine 195 and histidine 197.

It belongs to the 4-hydroxy-2-oxovalerate aldolase family.

It catalyses the reaction (S)-4-hydroxy-2-oxopentanoate = acetaldehyde + pyruvate. In Salinispora arenicola (strain CNS-205), this protein is 4-hydroxy-2-oxovalerate aldolase 2.